The following is a 61-amino-acid chain: Large ribosomal subunit protein bL28 (61 aa).

This sequence belongs to the bacterial ribosomal protein bL28 family.

The sequence is that of Large ribosomal subunit protein bL28 from Lacticaseibacillus paracasei (strain ATCC 334 / BCRC 17002 / CCUG 31169 / CIP 107868 / KCTC 3260 / NRRL B-441) (Lactobacillus paracasei).